The primary structure comprises 825 residues: Osmosensitive cation channel TMEM63C (825 aa).

The Extracellular portion of the chain corresponds to 1-50 (MAFESWPAGGVRPVEELDVRSFLMEENSTAERCYRSHSRSSVLQGLPFGG). The helical transmembrane segment at 51–75 (VPTVLAINVVLWLILLLIFSCLRKA) threads the bilayer. Over 76–141 (AWDYGRLALL…KDEEIRSKCG (66 aa)) the chain is Cytoplasmic. The disordered stretch occupies residues 98 to 117 (EQSEKEKTPSDSSPSDSETK). The helical transmembrane segment at 142-174 (IDAVTYLSFQRHIILLMMVVCLLSLTIILPVNL) threads the bilayer. The Extracellular portion of the chain corresponds to 175–198 (SGNLLGDNPENFGRTTVVNVPAQN). A helical transmembrane segment spans residues 199 to 223 (IFLWLHSIFALLYFVITVLCMAHHS). Residues 224-418 (SRLEYREDEK…IIWENLSVCG (195 aa)) are Cytoplasmic-facing. The helical transmembrane segment at 419-448 (PRWWLRCILLNILLFLLLFFLTTPAIIVNT) threads the bilayer. At 449-463 (MDKFNVTRPVESLRN) the chain is on the extracellular side. A helical transmembrane segment spans residues 464–493 (PVITQFFPTLLLWAFSILLPFIVYYSSFFE). Residues 494–497 (YHWT) are Cytoplasmic-facing. A helical transmembrane segment spans residues 498-534 (RSGENQVTMHKCFLLLVFMVIILPSLGLSSLNLFFRW). Over 535 to 557 (LFDVRFLDETDVKFQCVFLPDNG) the chain is Extracellular. A helical transmembrane segment spans residues 558–590 (AFFVNYVITSSLIGTAMELLRIPALLVYSLRLC). Over 591–610 (FAKSKAECIHVKISQAYEFQ) the chain is Cytoplasmic. A helical transmembrane segment spans residues 611-629 (FGLEYAWTMCIFSVSMTYS). The Extracellular portion of the chain corresponds to 630–632 (ITC). The chain crosses the membrane as a helical span at residues 633 to 657 (PVIVPFGLLYLVLKHMVDRYNIYYA). At 658–664 (YTPTKLN) the chain is on the cytoplasmic side. The helical transmembrane segment at 665-693 (QRIHAAAISQVVVAPILCMFWLLFFSVLR) threads the bilayer. Residues 694–698 (LGPVQ) lie on the Extracellular side of the membrane. A helical membrane pass occupies residues 699–719 (PITLFTFITLLCSIAFSCFGF). The Cytoplasmic segment spans residues 720-825 (CMKKLRADRS…LLMDSPVAFQ (106 aa)). Residues 777-825 (SPAHQSYGTMVNSQSSVRDAEEDEEKDLEETLETELKDDLLMDSPVAFQ) form a disordered region. The segment covering 779–793 (AHQSYGTMVNSQSSV) has biased composition (polar residues). Over residues 796 to 809 (AEEDEEKDLEETLE) the composition is skewed to acidic residues.

Belongs to the CSC1 (TC 1.A.17) family. In terms of assembly, monomer.

It is found in the endoplasmic reticulum membrane. The protein localises to the cell membrane. It catalyses the reaction Ca(2+)(in) = Ca(2+)(out). Acts as an osmosensitive cation channel preferentially activated upon hypotonic stress. In contrast to tmem63b, does not show phospholipid scramblase activity. Required for the functional integrity of the kidney glomerular filtration barrier. The polypeptide is Osmosensitive cation channel TMEM63C (tmem63c) (Danio rerio (Zebrafish)).